Here is a 67-residue protein sequence, read N- to C-terminus: DNA gyrase inhibitor YacG (67 aa).

4 residues coordinate Zn(2+): C10, C13, C29, and C33. Over residues 44–57 the composition is skewed to basic and acidic residues; that stretch reads EEKRIPSSGDRSDT. Residues 44 to 67 form a disordered region; the sequence is EEKRIPSSGDRSDTDGWSEEENQP.

The protein belongs to the DNA gyrase inhibitor YacG family. Interacts with GyrB. Requires Zn(2+) as cofactor.

In terms of biological role, inhibits all the catalytic activities of DNA gyrase by preventing its interaction with DNA. Acts by binding directly to the C-terminal domain of GyrB, which probably disrupts DNA binding by the gyrase. In Cronobacter sakazakii (strain ATCC BAA-894) (Enterobacter sakazakii), this protein is DNA gyrase inhibitor YacG.